A 439-amino-acid polypeptide reads, in one-letter code: Dolichyl-diphosphooligosaccharide--protein glycosyltransferase 48 kDa subunit (439 aa).

The first 26 residues, 1–26 (MEPSTAARAWALFWLLPPLLGAVCAS), serve as a signal peptide directing secretion. Over 27–410 (GPRTLVLLDN…YERFIPSAYP (384 aa)) the chain is Lumenal. Residues 411–430 (YYASAFSMMLGLFIFSIVFL) traverse the membrane as a helical segment. At 431-439 (HMKEKEKSD) the chain is on the cytoplasmic side.

The protein belongs to the DDOST 48 kDa subunit family. As to quaternary structure, component of the oligosaccharyltransferase (OST) complex. OST exists in two different complex forms which contain common core subunits RPN1, RPN2, OST48, OST4, DAD1 and TMEM258, either STT3A or STT3B as catalytic subunits, and form-specific accessory subunits. STT3A complex assembly occurs through the formation of 3 subcomplexes. Subcomplex 1 contains RPN1 and TMEM258, subcomplex 2 contains the STT3A-specific subunits STT3A, DC2/OSTC, and KCP2 as well as the core subunit OST4, and subcomplex 3 contains RPN2, DAD1, and OST48. The STT3A complex can form stable complexes with the Sec61 complex or with both the Sec61 and TRAP complexes. Interacts with SMIM22.

It localises to the endoplasmic reticulum membrane. Its pathway is protein modification; protein glycosylation. Its function is as follows. Subunit of the oligosaccharyl transferase (OST) complex that catalyzes the initial transfer of a defined glycan (Glc(3)Man(9)GlcNAc(2) in eukaryotes) from the lipid carrier dolichol-pyrophosphate to an asparagine residue within an Asn-X-Ser/Thr consensus motif in nascent polypeptide chains, the first step in protein N-glycosylation. N-glycosylation occurs cotranslationally and the complex associates with the Sec61 complex at the channel-forming translocon complex that mediates protein translocation across the endoplasmic reticulum (ER). All subunits are required for a maximal enzyme activity. Required for the assembly of both SST3A- and SS3B-containing OST complexes. The sequence is that of Dolichyl-diphosphooligosaccharide--protein glycosyltransferase 48 kDa subunit from Pongo abelii (Sumatran orangutan).